A 141-amino-acid polypeptide reads, in one-letter code: Nucleoside diphosphate kinase (141 aa).

The ATP site is built by K9, F57, R85, T91, R102, and N112. Residue H115 is the Pros-phosphohistidine intermediate of the active site.

It belongs to the NDK family. In terms of assembly, homotetramer. The cofactor is Mg(2+).

The protein resides in the cytoplasm. It carries out the reaction a 2'-deoxyribonucleoside 5'-diphosphate + ATP = a 2'-deoxyribonucleoside 5'-triphosphate + ADP. The enzyme catalyses a ribonucleoside 5'-diphosphate + ATP = a ribonucleoside 5'-triphosphate + ADP. Its function is as follows. Major role in the synthesis of nucleoside triphosphates other than ATP. The ATP gamma phosphate is transferred to the NDP beta phosphate via a ping-pong mechanism, using a phosphorylated active-site intermediate. This Prosthecochloris aestuarii (strain DSM 271 / SK 413) protein is Nucleoside diphosphate kinase.